The following is a 261-amino-acid chain: uncharacterized protein (261 aa).

The region spanning 15–75 (SINPEDIISG…AMTDRALSKY (61 aa)) is the HTH tetR-type domain. A DNA-binding region (H-T-H motif) is located at residues 38-57 (SMPLLGKHLGVGVTSIYWYF). The interval 234 to 261 (AAGEVAVRRPTATADAPTPGARAKAVAR) is disordered. The segment covering 241-261 (RRPTATADAPTPGARAKAVAR) has biased composition (low complexity).

This is an uncharacterized protein from Mycobacterium bovis (strain ATCC BAA-935 / AF2122/97).